The primary structure comprises 309 residues: Serine/threonine-protein phosphatase 2A catalytic subunit beta isoform (309 aa).

Asp-57, His-59, Asp-85, and Asn-117 together coordinate Mn(2+). The Proton donor role is filled by His-118. Mn(2+)-binding residues include His-167 and His-241. At Tyr-307 the chain carries Phosphotyrosine. Leu-309 carries the leucine methyl ester modification.

This sequence belongs to the PPP phosphatase family. PP-1 subfamily. As to quaternary structure, PP2A consists of a common heterodimeric core enzyme (composed of a 36 kDa catalytic subunit (subunit C) and a 65 kDa constant regulatory subunit (PR65) (subunit A)) that associates with a variety of regulatory subunits. Proteins that associate with the core dimer include three families of regulatory subunits B (the R2/B/PR55/B55, R3/B''/PR72/PR130/PR59 and R5/B'/B56 families), the 48 kDa variable regulatory subunit, viral proteins, and cell signaling molecules. Binds PPME1. May indirectly interact with SGO1, most probably through regulatory B56 subunits. Found in a complex with at least ARL2, PPP2CB, PPP2R1A, PPP2R2A, PPP2R5E and TBCD. Interacts with TBCD. Interacts with CTTNBP2NL. Interacts with PTPA. Part of the core of STRIPAK complexes composed of PP2A catalytic and scaffolding subunits, the striatins (PP2A regulatory subunits), the striatin-associated proteins MOB4, STRIP1 and STRIP2, PDCD10 and members of the STE20 kinases, such as STK24 and STK26. Requires Mn(2+) as cofactor. Reversibly methyl esterified on Leu-309 by leucine carboxyl methyltransferase 1 (LCMT1) and protein phosphatase methylesterase 1 (PPME1). Carboxyl methylation influences the affinity of the catalytic subunit for the different regulatory subunits, thereby modulating the PP2A holoenzyme's substrate specificity, enzyme activity and cellular localization. In terms of processing, phosphorylation of either threonine (by autophosphorylation-activated protein kinase) or tyrosine results in inactivation of the phosphatase. Auto-dephosphorylation has been suggested as a mechanism for reactivation. Post-translationally, may be monoubiquitinated by NOSIP.

Its subcellular location is the cytoplasm. It localises to the nucleus. It is found in the chromosome. The protein localises to the centromere. The protein resides in the cytoskeleton. Its subcellular location is the spindle pole. The catalysed reaction is O-phospho-L-seryl-[protein] + H2O = L-seryl-[protein] + phosphate. It carries out the reaction O-phospho-L-threonyl-[protein] + H2O = L-threonyl-[protein] + phosphate. Its function is as follows. Catalytic subunit of protein phosphatase 2A (PP2A), a serine/threonine phosphatase involved in the regulation of a wide variety of enzymes, signal transduction pathways, and cellular events. PP2A can modulate the activity of phosphorylase B kinase, casein kinase 2, mitogen-stimulated S6 kinase, and MAP-2 kinase. Part of the striatin-interacting phosphatase and kinase (STRIPAK) complexes. STRIPAK complexes have critical roles in protein (de)phosphorylation and are regulators of multiple signaling pathways including Hippo, MAPK, nuclear receptor and cytoskeleton remodeling. Different types of STRIPAK complexes are involved in a variety of biological processes such as cell growth, differentiation, apoptosis, metabolism and immune regulation. The sequence is that of Serine/threonine-protein phosphatase 2A catalytic subunit beta isoform (PPP2CB) from Bos taurus (Bovine).